Reading from the N-terminus, the 166-residue chain is UPF0251 protein UNCMA_27150 (166 aa).

Belongs to the UPF0251 family.

The polypeptide is UPF0251 protein UNCMA_27150 (Methanocella arvoryzae (strain DSM 22066 / NBRC 105507 / MRE50)).